Here is a 208-residue protein sequence, read N- to C-terminus: MAVVVVNSATASLLAVCLVFMAVGLCTGQIVDVKFPSCRCERELTPFAIKSAATQLTSRNPGVVNLYCFEIGIVNSGSGACYTEPASQNLSKVSVYAQAAQRDRLSAFGVLLAGAPVSNMTYLTPRWDSLNMTTISNLNFSKTQANGTRICLELFKPTTINEFCEREGASGSFCWVALFNDNNCVPPNSTVVISKRLCCPRFQSFLSP.

The first 11 residues, 1-11, serve as a signal peptide directing secretion; that stretch reads MAVVVVNSATA. N-linked (GlcNAc...) asparagine glycans are attached at residues Asn89, Asn119, Asn131, Asn139, Asn146, and Asn188.

Functionally, the sexual inducer is a glycoprotein synthesized and released by sexual males at about the time they release sperm packets. It is one of the most potent biological effector molecules known: it exhibits full effectiveness in converting asexually growing males and females to the sexual pathway at about 10(-7) m. This is Sexual inducer glycoprotein from Volvox carteri (Green alga).